A 94-amino-acid polypeptide reads, in one-letter code: Small ribosomal subunit protein uS19 (94 aa).

Belongs to the universal ribosomal protein uS19 family.

Functionally, protein S19 forms a complex with S13 that binds strongly to the 16S ribosomal RNA. This is Small ribosomal subunit protein uS19 from Caldicellulosiruptor saccharolyticus (strain ATCC 43494 / DSM 8903 / Tp8T 6331).